We begin with the raw amino-acid sequence, 1712 residues long: Collagen alpha-2(IV) chain (1712 aa).

The signal sequence occupies residues 1-25 (MGRDQRAVAGPALRRWLLLGTVTVG). Positions 26–183 (FLAQSVLAGV…LPKEERDRYR (158 aa)) are cleaved as a propeptide — N-terminal propeptide (7S domain). Disordered stretches follow at residues 60–237 (RGQP…GFYG), 302–448 (GLRG…PDGF), 507–640 (INGE…DAGL), 690–906 (GLPG…SPGF), and 1157–1480 (TGPP…GLPG). Positions 68–84 (PQGYNGPPGLQGFPGLQ) are enriched in low complexity. The span at 121 to 130 (GHPGQGGPRG) shows a compositional bias: gly residues. Residue Asn138 is glycosylated (N-linked (GlcNAc...) asparagine). Low complexity predominate over residues 140–153 (TQGDSGPQGPPGSE). A compositionally biased stretch (basic and acidic residues) spans 175 to 186 (PKEERDRYRGEP). The triple-helical region stretch occupies residues 184–1484 (GEPGEPGLVG…SPGLPGMPGR (1301 aa)). Composition is skewed to pro residues over residues 215 to 224 (RPGPPGPPGP) and 433 to 445 (PPGP…PPGP). 2 stretches are compositionally biased toward basic and acidic residues: residues 511–520 (PGRKGDRGDP) and 571–582 (KGDDGSPGRDGL). Low complexity-rich tracts occupy residues 628–640 (LKGQ…DAGL) and 698–710 (TGAK…PGFA). The segment covering 711 to 720 (GADGGPGPRG) has biased composition (gly residues). A compositionally biased stretch (low complexity) spans 721 to 730 (LPGDAGREGF). A compositionally biased stretch (pro residues) spans 752 to 766 (DGSPGPIGLPGPDGP). 5 stretches are compositionally biased toward low complexity: residues 769–778 (ERGLPGEVLG), 813–823 (MPGMPGLKGQP), 831–844 (QPGL…HGFP), 1302–1328 (GSAA…KGWA), and 1400–1421 (QPGT…EMGP). Residues 1489-1712 (GYLLVKHSQT…SRCQVCMKNL (224 aa)) enclose the Collagen IV NC1 domain. Tyr1490 bears the 3'-bromotyrosine mark. Intrachain disulfides connect Cys1504–Cys1593, Cys1537–Cys1590, Cys1549–Cys1555, Cys1612–Cys1708, Cys1646–Cys1705, and Cys1658–Cys1665.

It belongs to the type IV collagen family. As to quaternary structure, there are six type IV collagen isoforms, alpha 1(IV)-alpha 6(IV), each of which can form a triple helix structure with 2 other chains to generate type IV collagen network. Interacts with EFEMP2. In terms of processing, prolines at the third position of the tripeptide repeating unit (G-X-Y) are hydroxylated in some or all of the chains. Post-translationally, type IV collagens contain numerous cysteine residues which are involved in inter- and intramolecular disulfide bonding. 12 of these, located in the NC1 domain, are conserved in all known type IV collagens. The trimeric structure of the NC1 domains is stabilized by covalent bonds between Lys and Met residues. In terms of processing, proteolytic processing produces the C-terminal NC1 peptide, canstatin.

The protein localises to the secreted. Its subcellular location is the extracellular space. It localises to the extracellular matrix. It is found in the basement membrane. Functionally, type IV collagen is the major structural component of glomerular basement membranes (GBM), forming a 'chicken-wire' meshwork together with laminins, proteoglycans and entactin/nidogen. Its function is as follows. Canstatin, a cleavage product corresponding to the collagen alpha 2(IV) NC1 domain, possesses both anti-angiogenic and anti-tumor cell activity. It inhibits proliferation and migration of endothelial cells, reduces mitochondrial membrane potential, and induces apoptosis. Specifically induces Fas-dependent apoptosis and activates procaspase-8 and -9 activity. Ligand for alphavbeta3 and alphavbeta5 integrins. This is Collagen alpha-2(IV) chain from Homo sapiens (Human).